Consider the following 441-residue polypeptide: Protein translocase subunit SecY (441 aa).

10 consecutive transmembrane segments (helical) span residues 25 to 45 (YFVI…IPGI), 78 to 98 (IFAL…ILTL), 126 to 146 (LILA…IPGL), 155 to 175 (ISFY…LMWL), 184 to 204 (IGNG…PSSF), 218 to 238 (VLLF…VVYI), 275 to 295 (VIPA…ASWF), 318 to 338 (YILT…GLAF), 376 to 396 (FLGS…RFFM), and 398 to 418 (VPFY…IDFI).

It belongs to the SecY/SEC61-alpha family. Component of the Sec protein translocase complex. Heterotrimer consisting of SecY, SecE and SecG subunits. The heterotrimers can form oligomers, although 1 heterotrimer is thought to be able to translocate proteins. Interacts with the ribosome. Interacts with SecDF, and other proteins may be involved. Interacts with SecA.

Its subcellular location is the cell membrane. The central subunit of the protein translocation channel SecYEG. Consists of two halves formed by TMs 1-5 and 6-10. These two domains form a lateral gate at the front which open onto the bilayer between TMs 2 and 7, and are clamped together by SecE at the back. The channel is closed by both a pore ring composed of hydrophobic SecY resides and a short helix (helix 2A) on the extracellular side of the membrane which forms a plug. The plug probably moves laterally to allow the channel to open. The ring and the pore may move independently. This is Protein translocase subunit SecY from Buchnera aphidicola subsp. Baizongia pistaciae (strain Bp).